A 268-amino-acid chain; its full sequence is Glucosamine-6-phosphate deaminase (268 aa).

Aspartate 72 (proton acceptor; for enolization step) is an active-site residue. The active-site For ring-opening step is the aspartate 141. The active-site Proton acceptor; for ring-opening step is histidine 143. The active-site For ring-opening step is glutamate 148.

This sequence belongs to the glucosamine/galactosamine-6-phosphate isomerase family. NagB subfamily.

It carries out the reaction alpha-D-glucosamine 6-phosphate + H2O = beta-D-fructose 6-phosphate + NH4(+). The protein operates within amino-sugar metabolism; N-acetylneuraminate degradation; D-fructose 6-phosphate from N-acetylneuraminate: step 5/5. Its activity is regulated as follows. Allosterically activated by N-acetylglucosamine 6-phosphate (GlcNAc6P). Catalyzes the reversible isomerization-deamination of glucosamine 6-phosphate (GlcN6P) to form fructose 6-phosphate (Fru6P) and ammonium ion. In Borreliella afzelii (strain PKo) (Borrelia afzelii), this protein is Glucosamine-6-phosphate deaminase.